Consider the following 500-residue polypeptide: MKAFKQKQVWFITGSQDLYGPKVLEQVAKNSEQIVHGFNESSAISIEVVYKPTVKSPREIHAVCQAANSDENCVGVILWMHTFSPAKMWIAGLNELSKPFMHLHTQFNAELPWSEINMNYMNTHQSAHGCREFGFIGTRMRKERKVVVGHWQSSDVQAQIDDWCRAAAGWHESQNLRIARFGDNMRQVAVTEGDKVAAQIQFGYEVHAYSLGELNEAIAAIAEGDVTAQLDRYASEYQVGNELFGDEYQLDRLRKEAKIELGLTQFLTQGGFGAFTNCFENLTGMTGLPGLATQRLMANGFGYGGEGDWKTAAMVRIMKVMGQGRAGGTSFMEDYTYNFGATDQVLGAHMLEVCPSIAAAKPRLEVHRHTIGVRCDVPRLLFTGKAGPAINVSTIDLGNRFRIILNELDTVTPPQDLPNLPVASALWEPRPNLAVAAAAWIHAGGAHHSAYSQAITTDQIVDFAEMAGAELVIIDADTKIREFKNELRQNSVYYGLARGL.

Mn(2+)-binding residues include Glu-306, Glu-333, His-349, and His-448.

The protein belongs to the arabinose isomerase family. Mn(2+) is required as a cofactor.

The enzyme catalyses beta-L-arabinopyranose = L-ribulose. It functions in the pathway carbohydrate degradation; L-arabinose degradation via L-ribulose; D-xylulose 5-phosphate from L-arabinose (bacterial route): step 1/3. Catalyzes the conversion of L-arabinose to L-ribulose. This chain is L-arabinose isomerase, found in Shewanella sp. (strain MR-7).